The chain runs to 271 residues: MNRYQTMFKSLNQNKLGAFVPFITIGDPDPTTFIHIIDTLIQSGADALELGIPFSDPVSDGPSIQKSMERSFKSGANISSCLQLIKKIRNKYPTLPIGLLIYANLIFKNGIKNFYAHCSTLSIDSILIPDLPIEESSLFYNSAMYYQIAHIFICPTNASLDLIKKITDKGIGYIYLLSRSGITGINNTEFNKIKLNTLIYNIKQCNQKLPILQGFGIYSSEQARSSLLSGTSGIISGSCIANIIEENHPNIDLLLEKIRKFTHLMKIAMKL.

Active-site proton acceptor residues include Glu49 and Asp60.

This sequence belongs to the TrpA family. Tetramer of two alpha and two beta chains.

It carries out the reaction (1S,2R)-1-C-(indol-3-yl)glycerol 3-phosphate + L-serine = D-glyceraldehyde 3-phosphate + L-tryptophan + H2O. It functions in the pathway amino-acid biosynthesis; L-tryptophan biosynthesis; L-tryptophan from chorismate: step 5/5. Its function is as follows. The alpha subunit is responsible for the aldol cleavage of indoleglycerol phosphate to indole and glyceraldehyde 3-phosphate. In Blochmanniella floridana, this protein is Tryptophan synthase alpha chain.